The following is a 380-amino-acid chain: Actin-like protein (380 aa).

It belongs to the actin family. ARP1 subfamily.

Its subcellular location is the cytoplasm. It localises to the cytoskeleton. In terms of biological role, involved in nuclear migration. May function as a component of the dynactin complex which activates force generation by cytoplasmic dynein. The chain is Actin-like protein (ro-4) from Neurospora crassa (strain ATCC 24698 / 74-OR23-1A / CBS 708.71 / DSM 1257 / FGSC 987).